Reading from the N-terminus, the 227-residue chain is MFKRMAEFGPDSGGRVKGVTIVKPIVYGNVARYFGKKREEDGHTHQWTVYVKPYRNEDMSAYVKKIQFKLHESYGNPLRVVTKPPYEITETGWGEFEIIIKIFFIDPNERPVTLYHLLKLFQSDTNAMLGKKTVVSEFYDEMIFQDPTAMMQQLLTTSRQLTLGAYKHETEFAELEVKTREKLEAAKKKTSFEIAELKERLKASRETINCLKNEIRKLEEDDQAKDI.

The YEATS domain maps to 15–158 (RVKGVTIVKP…AMMQQLLTTS (144 aa)). A Glycyl lysine isopeptide (Lys-Gly) (interchain with G-Cter in SUMO2) cross-link involves residue Lys37. Residues 93-97 (WGEFE) form a diacetylated histone H3 binding region. Residues 163 to 227 (LGAYKHETEF…LEEDDQAKDI (65 aa)) are interaction with MLLT10. The interval 168-227 (HETEFAELEVKTREKLEAAKKKTSFEIAELKERLKASRETINCLKNEIRKLEEDDQAKDI) is interaction with TACC1. A coiled-coil region spans residues 178-226 (KTREKLEAAKKKTSFEIAELKERLKASRETINCLKNEIRKLEEDDQAKD).

In terms of assembly, component of numerous complexes with chromatin remodeling and histone acetyltransferase activity. Component of the NuA4 histone acetyltransferase complex which contains the catalytic subunit KAT5/TIP60 and the subunits EP400, TRRAP/PAF400, BRD8/SMAP, EPC1, DMAP1/DNMAP1, RUVBL1/TIP49, RUVBL2, ING3, actin, ACTL6A/BAF53A, MORF4L1/MRG15, MORF4L2/MRGX, MRGBP, YEATS4/GAS41, VPS72/YL1 and MEAF6. The NuA4 complex interacts with MYC and the adenovirus E1A protein. Component of a NuA4-related complex which contains EP400, TRRAP/PAF400, SRCAP, BRD8/SMAP, EPC1, DMAP1/DNMAP1, RUVBL1/TIP49, RUVBL2, actin, ACTL6A/BAF53A, VPS72 and YEATS4/GAS41. Interacts with MLLT10/AF10. Also interacts with the SWI/SNF component SMARCB1/BAF47, TACC1 and TACC2, and the nuclear matrix protein NUMA1. Expressed in brain, heart, kidney, liver, lung, pancreas, placenta and skeletal muscle.

The protein localises to the nucleus. Chromatin reader component of the NuA4 histone acetyltransferase (HAT) complex, a complex involved in transcriptional activation of select genes principally by acetylation of nucleosomal histones H4 and H2A. Specifically recognizes and binds acylated histone H3, with a preference for histone H3 diacetylated at 'Lys-18' and 'Lys-27' (H3K18ac and H3K27ac) or histone H3 diacetylated at 'Lys-14' and 'Lys-27' (H3K14ac and H3K27ac). Also able to recognize and bind crotonylated histone H3. May also recognize and bind histone H3 succinylated at 'Lys-122' (H3K122succ); additional evidences are however required to confirm this result in vivo. Plays a key role in histone variant H2AZ1/H2A.Z deposition into specific chromatin regions: recognizes and binds H3K14ac and H3K27ac on the promoters of actively transcribed genes and recruits NuA4-related complex to deposit H2AZ1/H2A.Z. H2AZ1/H2A.Z deposition is required for maintenance of embryonic stem cell. This is YEATS domain-containing protein 4 from Homo sapiens (Human).